Consider the following 249-residue polypeptide: Segregation and condensation protein A (249 aa).

Belongs to the ScpA family. In terms of assembly, component of a cohesin-like complex composed of ScpA, ScpB and the Smc homodimer, in which ScpA and ScpB bind to the head domain of Smc. The presence of the three proteins is required for the association of the complex with DNA.

It localises to the cytoplasm. In terms of biological role, participates in chromosomal partition during cell division. May act via the formation of a condensin-like complex containing Smc and ScpB that pull DNA away from mid-cell into both cell halves. This Listeria monocytogenes serotype 4b (strain CLIP80459) protein is Segregation and condensation protein A.